Reading from the N-terminus, the 321-residue chain is Lipoyl synthase (321 aa).

Residues Cys68, Cys73, Cys79, Cys94, Cys98, Cys101, and Ser308 each contribute to the [4Fe-4S] cluster site. The region spanning 80 to 297 (FNHGTATFMI…KAEAMAMGFT (218 aa)) is the Radical SAM core domain.

This sequence belongs to the radical SAM superfamily. Lipoyl synthase family. Requires [4Fe-4S] cluster as cofactor.

It localises to the cytoplasm. It carries out the reaction [[Fe-S] cluster scaffold protein carrying a second [4Fe-4S](2+) cluster] + N(6)-octanoyl-L-lysyl-[protein] + 2 oxidized [2Fe-2S]-[ferredoxin] + 2 S-adenosyl-L-methionine + 4 H(+) = [[Fe-S] cluster scaffold protein] + N(6)-[(R)-dihydrolipoyl]-L-lysyl-[protein] + 4 Fe(3+) + 2 hydrogen sulfide + 2 5'-deoxyadenosine + 2 L-methionine + 2 reduced [2Fe-2S]-[ferredoxin]. The protein operates within protein modification; protein lipoylation via endogenous pathway; protein N(6)-(lipoyl)lysine from octanoyl-[acyl-carrier-protein]: step 2/2. In terms of biological role, catalyzes the radical-mediated insertion of two sulfur atoms into the C-6 and C-8 positions of the octanoyl moiety bound to the lipoyl domains of lipoate-dependent enzymes, thereby converting the octanoylated domains into lipoylated derivatives. This chain is Lipoyl synthase, found in Enterobacter sp. (strain 638).